The sequence spans 238 residues: Glycerol-3-phosphate acyltransferase (238 aa).

The next 6 membrane-spanning stretches (helical) occupy residues 5 to 25 (VIFGSNILLILVAYFIGSINF), 61 to 81 (FLVFFLDVSKSFWFAIISAIL), 88 to 108 (FGAVITQLVVLFVIIGHVFPI), 125 to 145 (IASLNIILAIIGGIIFFAMIF), 149 to 169 (IVSLGSFITPFILVIFMIIPW), and 194 to 214 (AWYLSSLFLFLAALIILFTHI).

It belongs to the PlsY family. Probably interacts with PlsX.

The protein resides in the cell membrane. It catalyses the reaction an acyl phosphate + sn-glycerol 3-phosphate = a 1-acyl-sn-glycero-3-phosphate + phosphate. Its pathway is lipid metabolism; phospholipid metabolism. In terms of biological role, catalyzes the transfer of an acyl group from acyl-phosphate (acyl-PO(4)) to glycerol-3-phosphate (G3P) to form lysophosphatidic acid (LPA). This enzyme utilizes acyl-phosphate as fatty acyl donor, but not acyl-CoA or acyl-ACP. This Mycoplasma mobile (strain ATCC 43663 / 163K / NCTC 11711) (Mesomycoplasma mobile) protein is Glycerol-3-phosphate acyltransferase.